We begin with the raw amino-acid sequence, 1131 residues long: RNA2 polyprotein (1131 aa).

The tract at residues 213–236 is disordered; sequence ALRTHPGGPALPPLPPPPPIQKPP. The segment covering 221-234 has biased composition (pro residues); it reads PALPPLPPPPPIQK.

It belongs to the nepoviruses RNA2 polyprotein family. Specific enzymatic cleavages in vivo by the P1 encoded 3C-like protease yield mature proteins.

The protein resides in the host cell junction. It localises to the host plasmodesma. It is found in the virion. Its function is as follows. Implicated in RNA2 replication. Could also be required for nematode transmission of the virus. Functionally, transports viral genome to neighboring plant cells directly through plasmosdesmata, without any budding. The movement protein allows efficient cell to cell propagation, by bypassing the host cell wall barrier. Acts by forming a tubular structure at the host plasmodesmata, enlarging it enough to allow free passage of virion capsids. The chain is RNA2 polyprotein from Vitis vinifera (Grape).